The following is a 130-amino-acid chain: Small ribosomal subunit protein uS8 (130 aa).

It belongs to the universal ribosomal protein uS8 family. In terms of assembly, part of the 30S ribosomal subunit. Contacts proteins S5 and S12.

One of the primary rRNA binding proteins, it binds directly to 16S rRNA central domain where it helps coordinate assembly of the platform of the 30S subunit. In Klebsiella pneumoniae subsp. pneumoniae (strain ATCC 700721 / MGH 78578), this protein is Small ribosomal subunit protein uS8.